The primary structure comprises 355 residues: Peptide chain release factor 1 (355 aa).

The residue at position 233 (glutamine 233) is an N5-methylglutamine. Residues 280-293 (ERRKKEQERADSRR) are compositionally biased toward basic and acidic residues. The disordered stretch occupies residues 280–308 (ERRKKEQERADSRRGQVGSGDRSERIRTY).

The protein belongs to the prokaryotic/mitochondrial release factor family. In terms of processing, methylated by PrmC. Methylation increases the termination efficiency of RF1.

Its subcellular location is the cytoplasm. Its function is as follows. Peptide chain release factor 1 directs the termination of translation in response to the peptide chain termination codons UAG and UAA. In Rickettsia peacockii (strain Rustic), this protein is Peptide chain release factor 1.